A 346-amino-acid polypeptide reads, in one-letter code: Dimethyladenosine transferase 1, mitochondrial (346 aa).

A mitochondrion-targeting transit peptide spans 1–27 (MATQGVLAKYRLPPLPTIGEIIKLFNL). Asparagine 36, leucine 38, glycine 63, glutamate 85, lysine 86, aspartate 111, isoleucine 112, and asparagine 141 together coordinate S-adenosyl-L-methionine.

The protein belongs to the class I-like SAM-binding methyltransferase superfamily. rRNA adenine N(6)-methyltransferase family. KsgA subfamily.

It localises to the mitochondrion. The enzyme catalyses adenosine(N)/adenosine(N+1) in rRNA + 4 S-adenosyl-L-methionine = N(6)-dimethyladenosine(N)/N(6)-dimethyladenosine(N+1) in rRNA + 4 S-adenosyl-L-homocysteine + 4 H(+). Mitochondrial methyltransferase which uses S-adenosyl methionine to dimethylate two highly conserved adjacent adenosine residues (A1583 and A1584) within the loop of helix 45 at the 3-prime end of 12S rRNA, thereby regulating the assembly or stability of the small subunit of the mitochondrial ribosome. Also required for basal transcription of mitochondrial DNA, probably via its interaction with POLRMT and TFAM. Stimulates transcription independently of the methyltransferase activity. This Xenopus tropicalis (Western clawed frog) protein is Dimethyladenosine transferase 1, mitochondrial (tfb1m).